The primary structure comprises 195 residues: Apoptosis-associated speck-like protein containing a CARD (195 aa).

Residues 1-91 (MGRARDAILD…AGQLQAATHQ (91 aa)) enclose the Pyrin domain. Residues Lys-55 and Lys-174 each participate in a glycyl lysine isopeptide (Lys-Gly) (interchain with G-Cter in ubiquitin) cross-link. Residues 107-195 (AAKPGLHFID…SYLVEDLERS (89 aa)) enclose the CARD domain. A Phosphoserine modification is found at Ser-195.

As to quaternary structure, self-associates; enforced oligomerization induces apoptosis, NF-kappa-B regulation and interleukin-1 beta secretion. Homooligomers can form disk-like particles of approximately 12 nm diameter and approximately 1 nm height. Next to isoform 1, also isoform 2 and isoform 3 may be involved in oligomerization leading to functional regulation. Component of several inflammasomes containing one pattern recognition receptor/sensor, such as NLRP1, NLRP2, NLRP3, NLRP6, NLRC4, AIM2, MEFV or NOD2, and probably NLRC4, NLRP12 or IFI16. Major component of the ASC pyroptosome, a 1-2 um supramolecular assembly (one per macrophage cell) which consists of oligomerized PYCARD dimers and CASP1. Interacts with CASP1 (precursor form); the interaction induces activation of CASP1 leading to the processing of interleukin-1 beta; PYCARD competes with RIPK2 for binding to CASP1. Interacts with NLRP3; the interaction requires the homooligomerization of NLRP3. Interacts with NLRP2, NLRC4, MEFV, CARD16, AIM2, IFI16, NOD2, RIGI, RIPK2, PYDC1, PYDC2, NLRP10, CASP8, CHUK, IKBKB and BAX. Component of the AIM2 PANoptosome complex, a multiprotein complex that drives inflammatory cell death (PANoptosis). In terms of processing, phosphorylated. Post-translationally, 'Lys-63'-linked polyubiquitination by TRAF3 is critical for speck formation and inflammasome activation. 'Lys-63'-linked deubiquitinated by USP50; a crucial step for NLRP3-mediated inflammasome activation. 'Lys-63'-linked polyubiquitination by PELI1 is also critical for speck formation and inflammasome activation. Deubiquitinated by USP3 that cleaves 'Lys-48'-linked ubiquitin chains and strengthens its stability by blocking proteasomal degradation. In terms of tissue distribution, widely expressed at low levels. Detected in peripheral blood leukocytes, lung, small intestine, spleen, thymus, colon and at lower levels in placenta, liver and kidney. Very low expression in skeletal muscle, heart and brain. Expressed in lung epithelial cells (at protein level). Detected in the leukemia cell lines HL-60 and U-937, but not in Jurkat T-cell lymphoma and Daudi Burkitt's lymphoma. Detected in the melanoma cell line WM35, but not in WM793. Not detected in HeLa cervical carcinoma cells and MOLT-4 lymphocytic leukemia cells.

Its subcellular location is the cytoplasm. It localises to the inflammasome. The protein resides in the endoplasmic reticulum. The protein localises to the mitochondrion. It is found in the nucleus. Its subcellular location is the golgi apparatus membrane. Functions as a key mediator in apoptosis and inflammation. Promotes caspase-mediated apoptosis involving predominantly caspase-8 and also caspase-9 in a probable cell type-specific manner. Involved in activation of the mitochondrial apoptotic pathway, promotes caspase-8-dependent proteolytic maturation of BID independently of FADD in certain cell types and also mediates mitochondrial translocation of BAX and activates BAX-dependent apoptosis coupled to activation of caspase-9, -2 and -3. Involved in innate immune response by acting as an integral adapter in the assembly of various inflammasomes (NLRP1, NLRP2, NLRP3, NLRP6, AIM2 and probably IFI16) which recruit and activate caspase-1 leading to processing and secretion of pro-inflammatory cytokines. Caspase-1-dependent inflammation leads to macrophage pyroptosis, a form of cell death. The function as activating adapter in different types of inflammasomes is mediated by the pyrin and CARD domains and their homotypic interactions. Clustered PYCARD nucleates the formation of caspase-1 filaments through the interaction of their respective CARD domains, acting as a platform for of caspase-1 polymerization. In the NLRP1 and NLRC4 inflammasomes seems not be required but facilitates the processing of procaspase-1. In cooperation with NOD2 involved in an inflammasome activated by bacterial muramyl dipeptide leading to caspase-1 activation. May be involved in RIGI-triggered pro-inflammatory responses and inflammasome activation. In collaboration with AIM2 which detects cytosolic double-stranded DNA may also be involved in a caspase-1-independent cell death that involves caspase-8. In adaptive immunity may be involved in maturation of dendritic cells to stimulate T-cell immunity and in cytoskeletal rearrangements coupled to chemotaxis and antigen uptake may be involved in post-transcriptional regulation of the guanine nucleotide exchange factor DOCK2; the latter function is proposed to involve the nuclear form. Also involved in transcriptional activation of cytokines and chemokines independent of the inflammasome; this function may involve AP-1, NF-kappa-B, MAPK and caspase-8 signaling pathways. For regulation of NF-kappa-B activating and inhibiting functions have been reported. Modulates NF-kappa-B induction at the level of the IKK complex by inhibiting kinase activity of CHUK and IKBK. Proposed to compete with RIPK2 for association with CASP1 thereby down-regulating CASP1-mediated RIPK2-dependent NF-kappa-B activation and activating interleukin-1 beta processing. Modulates host resistance to DNA virus infection, probably by inducing the cleavage of and inactivating CGAS in presence of cytoplasmic double-stranded DNA. In terms of biological role, may have a regulating effect on the function as inflammasome adapter. Functionally, seems to inhibit inflammasome-mediated maturation of interleukin-1 beta. This chain is Apoptosis-associated speck-like protein containing a CARD, found in Homo sapiens (Human).